The primary structure comprises 184 residues: MTWRSDDIWIELITGSRKISNFCWALILFLGSLGFLLVGTSSYLGRNLLSFFPPQQIIFFPQGIVMSFYGIAGLFISSYLWCTISWNVGSGYDRFDRKEGIVCIFRWGFPGKNRRIFLRFLIKDIQSVRIEVKEGIYARRVLYMDIRGQGSIPLTRTDENLTPREIEQKAAELAYFLRVPIEVF.

2 helical membrane passes run 19–39 (ISNF…LLVG) and 57–77 (IIFF…LFIS).

It belongs to the Ycf4 family.

The protein resides in the plastid. It localises to the chloroplast thylakoid membrane. In terms of biological role, seems to be required for the assembly of the photosystem I complex. This is Photosystem I assembly protein Ycf4 from Solanum bulbocastanum (Wild potato).